The chain runs to 432 residues: Glutamate-1-semialdehyde 2,1-aminomutase 1 (432 aa).

N6-(pyridoxal phosphate)lysine is present on lysine 268.

This sequence belongs to the class-III pyridoxal-phosphate-dependent aminotransferase family. HemL subfamily. In terms of assembly, homodimer. Requires pyridoxal 5'-phosphate as cofactor.

Its subcellular location is the cytoplasm. It catalyses the reaction (S)-4-amino-5-oxopentanoate = 5-aminolevulinate. It participates in porphyrin-containing compound metabolism; protoporphyrin-IX biosynthesis; 5-aminolevulinate from L-glutamyl-tRNA(Glu): step 2/2. The protein is Glutamate-1-semialdehyde 2,1-aminomutase 1 of Bacillus licheniformis (strain ATCC 14580 / DSM 13 / JCM 2505 / CCUG 7422 / NBRC 12200 / NCIMB 9375 / NCTC 10341 / NRRL NRS-1264 / Gibson 46).